The primary structure comprises 522 residues: Glycerol kinase (522 aa).

Residue Thr15 participates in substrate binding. Residue Arg19 participates in ATP binding. Residues 89 to 90 (RE), Tyr143, and 255 to 256 (DQ) each bind substrate. Residues Thr276, Gly321, and 430 to 434 (GATAN) each bind ATP.

Belongs to the FGGY kinase family. As to expression, highly expressed in germinating seeds and senescent leaves, and at lower levels in roots, leaves, flowers and siliques.

The protein resides in the cytoplasm. It is found in the cytosol. The catalysed reaction is glycerol + ATP = sn-glycerol 3-phosphate + ADP + H(+). The protein operates within polyol metabolism; glycerol degradation via glycerol kinase pathway; sn-glycerol 3-phosphate from glycerol: step 1/1. Its function is as follows. Key enzyme in the regulation of glycerol uptake and metabolism. Required for resistance to nonhost Pseudomonas bacteria and to the pathogenic fungus B.cinerea. In Arabidopsis thaliana (Mouse-ear cress), this protein is Glycerol kinase (GLPK).